The sequence spans 217 residues: 3,4-dihydroxy-2-butanone 4-phosphate synthase (217 aa).

D-ribulose 5-phosphate is bound by residues 37–38 (RE), Asp42, 150–154 (RGGHT), and Glu174. Position 38 (Glu38) interacts with Mg(2+). Position 153 (His153) interacts with Mg(2+).

It belongs to the DHBP synthase family. As to quaternary structure, homodimer. The cofactor is Mg(2+). Mn(2+) is required as a cofactor.

The catalysed reaction is D-ribulose 5-phosphate = (2S)-2-hydroxy-3-oxobutyl phosphate + formate + H(+). It participates in cofactor biosynthesis; riboflavin biosynthesis; 2-hydroxy-3-oxobutyl phosphate from D-ribulose 5-phosphate: step 1/1. Its function is as follows. Catalyzes the conversion of D-ribulose 5-phosphate to formate and 3,4-dihydroxy-2-butanone 4-phosphate. This Escherichia coli O17:K52:H18 (strain UMN026 / ExPEC) protein is 3,4-dihydroxy-2-butanone 4-phosphate synthase.